The primary structure comprises 236 residues: Small ribosomal subunit protein uS2c (236 aa).

It belongs to the universal ribosomal protein uS2 family.

It localises to the plastid. The protein localises to the chloroplast. The protein is Small ribosomal subunit protein uS2c (rps2) of Chloranthus spicatus (Chulantree).